The following is a 186-amino-acid chain: Signal peptidase I (186 aa).

Residues 1-19 (MTEEKSTNKKNSLFEWVKA) are Cytoplasmic-facing. A helical membrane pass occupies residues 20 to 40 (IIIAVVLALLIRAFLFEPYLV). Residues 41–186 (EGTSMDPTLH…FPFNEIRKTD (146 aa)) are Extracellular-facing. Active-site residues include serine 44 and lysine 86.

It belongs to the peptidase S26 family.

It is found in the cell membrane. The enzyme catalyses Cleavage of hydrophobic, N-terminal signal or leader sequences from secreted and periplasmic proteins.. In Bacillus licheniformis, this protein is Signal peptidase I (lepB).